A 663-amino-acid chain; its full sequence is Beta-galactosidase YesZ (663 aa).

Arg107 provides a ligand contact to substrate. Position 111 (Cys111) interacts with Zn(2+). Residue Asn145 participates in substrate binding. Glu146 functions as the Proton donor in the catalytic mechanism. Residues Cys154, Cys156, and Cys159 each coordinate Zn(2+). Glu297 (nucleophile) is an active-site residue. A substrate-binding site is contributed by Glu346–His349.

Belongs to the glycosyl hydrolase 42 family. As to quaternary structure, homotrimer.

It catalyses the reaction Hydrolysis of terminal non-reducing beta-D-galactose residues in beta-D-galactosides.. May play a role in the degradation of rhamnogalacturonan derived from plant cell walls. The sequence is that of Beta-galactosidase YesZ (yesZ) from Bacillus licheniformis (strain ATCC 14580 / DSM 13 / JCM 2505 / CCUG 7422 / NBRC 12200 / NCIMB 9375 / NCTC 10341 / NRRL NRS-1264 / Gibson 46).